The primary structure comprises 128 residues: Insoluble matrix shell protein 3 (128 aa).

The N-terminal stretch at 1–19 (MLMLLCIIATVIPFSLVEG) is a signal peptide.

As to expression, component of the acid-insoluble organic matrix of the calcified shell.

It is found in the secreted. In Ruditapes philippinarum (Japanese carpet shell), this protein is Insoluble matrix shell protein 3.